We begin with the raw amino-acid sequence, 160 residues long: Large ribosomal subunit protein uL22c (160 aa).

This sequence belongs to the universal ribosomal protein uL22 family. In terms of assembly, part of the 50S ribosomal subunit.

It localises to the plastid. It is found in the chloroplast. Functionally, this protein binds specifically to 23S rRNA. The globular domain of the protein is located near the polypeptide exit tunnel on the outside of the subunit, while an extended beta-hairpin is found that lines the wall of the exit tunnel in the center of the 70S ribosome. The protein is Large ribosomal subunit protein uL22c (rpl22) of Arabis hirsuta (Hairy rock-cress).